Consider the following 158-residue polypeptide: MFMSSIIELVTAAITPAIQTPYELVDVEYGKMGGDYVLSIFVDKEGGISLQDTADLSEKISPILDTIKPDPFPDQYMLEVTSPGLERPLKTADAVEKAVGKYIHVKLYQAIDKIKVFEGTLLSFDGTDLIMEYMDKTRKKEVTIPYQTVAKARLAVKL.

Belongs to the RimP family.

It is found in the cytoplasm. Required for maturation of 30S ribosomal subunits. The polypeptide is Ribosome maturation factor RimP (Streptococcus suis (strain 98HAH33)).